A 403-amino-acid polypeptide reads, in one-letter code: Probable protein phosphatase 2C 8 (403 aa).

The disordered stretch occupies residues 42 to 80 (LGRTASAVAEDDAAKRVRPASDSSSDSSESAKVAPEPTA). The segment covering 62–71 (SDSSSDSSES) has biased composition (low complexity). In terms of domain architecture, PPM-type phosphatase spans 90–388 (SHGAVSVIGR…DNISVVVVEL (299 aa)). 4 residues coordinate Mn(2+): D144, G145, D325, and D379.

It belongs to the PP2C family. The cofactor is Mg(2+). Mn(2+) serves as cofactor.

The catalysed reaction is O-phospho-L-seryl-[protein] + H2O = L-seryl-[protein] + phosphate. The enzyme catalyses O-phospho-L-threonyl-[protein] + H2O = L-threonyl-[protein] + phosphate. In Oryza sativa subsp. japonica (Rice), this protein is Probable protein phosphatase 2C 8.